The sequence spans 448 residues: D-inositol 3-phosphate glycosyltransferase (448 aa).

The tract at residues 1–21 is disordered; that stretch reads MAEQHTGVGRQRGARPWPRPR. Histidine 29 contributes to the 1D-myo-inositol 3-phosphate binding site. UDP-N-acetyl-alpha-D-glucosamine-binding positions include 35-36 and glycine 43; that span reads QP. 1D-myo-inositol 3-phosphate-binding positions include 40-45, lysine 98, tyrosine 131, threonine 155, and arginine 175; that span reads DAGGMN. 3 residues coordinate UDP-N-acetyl-alpha-D-glucosamine: arginine 255, lysine 260, and glutamine 321. Mg(2+) is bound by residues tyrosine 330, arginine 331, and alanine 333. Positions 343 and 351 each coordinate UDP-N-acetyl-alpha-D-glucosamine. Threonine 357 provides a ligand contact to Mg(2+).

This sequence belongs to the glycosyltransferase group 1 family. MshA subfamily. Homodimer.

The catalysed reaction is 1D-myo-inositol 3-phosphate + UDP-N-acetyl-alpha-D-glucosamine = 1D-myo-inositol 2-acetamido-2-deoxy-alpha-D-glucopyranoside 3-phosphate + UDP + H(+). Catalyzes the transfer of a N-acetyl-glucosamine moiety to 1D-myo-inositol 3-phosphate to produce 1D-myo-inositol 2-acetamido-2-deoxy-glucopyranoside 3-phosphate in the mycothiol biosynthesis pathway. This Salinispora arenicola (strain CNS-205) protein is D-inositol 3-phosphate glycosyltransferase.